A 262-amino-acid polypeptide reads, in one-letter code: Phosphate import ATP-binding protein PstB (262 aa).

In terms of domain architecture, ABC transporter spans methionine 16–valine 257. Glycine 48–serine 55 contributes to the ATP binding site.

The protein belongs to the ABC transporter superfamily. Phosphate importer (TC 3.A.1.7) family. The complex is composed of two ATP-binding proteins (PstB), two transmembrane proteins (PstC and PstA) and a solute-binding protein (PstS).

Its subcellular location is the cell inner membrane. The catalysed reaction is phosphate(out) + ATP + H2O = ADP + 2 phosphate(in) + H(+). Its function is as follows. Part of the ABC transporter complex PstSACB involved in phosphate import. Responsible for energy coupling to the transport system. The chain is Phosphate import ATP-binding protein PstB from Anaeromyxobacter dehalogenans (strain 2CP-C).